The following is a 311-amino-acid chain: MGSAARQPLFSFGVIADVQYADISDGRSFLGVPRYYRNSILVLQRAVETWNQHGNLKFVINMGDIVDGFCPKDQSLAATKKLVHEFEKFNGPVYHMIGNHCLYNLPREELLPLLKIPGRDGNAYYDFSPTPEYRVVVLDGYDISAVGWPQEHPNTIAALKILEEKNPNTDKNSPAGLEDVARRFVKYNGGVGEKQLQWLDSVLQDASNSNQRVIVCGHVPMSPGVASKAALLWNFDEVMNIIHKYDSVKVCLSGHDHKGGYFVDSHGVHHRSLEAALECPPGTYSFGYIDVYDNKLSLVGTDRMQSTDFEN.

Zn(2+)-binding residues include D17, Q19, D64, N99, H218, H255, and H257.

Belongs to the ADPRibase-Mn family. As to quaternary structure, monomer. It depends on Mg(2+) as a cofactor.

The catalysed reaction is CDP-choline + H2O = phosphocholine + CMP + 2 H(+). It carries out the reaction ADP-D-ribose + H2O = D-ribose 5-phosphate + AMP + 2 H(+). It catalyses the reaction CDP-glycerol + H2O = sn-glycerol 3-phosphate + CMP + 2 H(+). Functionally, hydrolyzes ADP-ribose, IDP-ribose, CDP-glycerol, CDP-choline and CDP-ethanolamine, but not other non-reducing ADP-sugars or CDP-glucose. The protein is Manganese-dependent ADP-ribose/CDP-alcohol diphosphatase of Arabidopsis thaliana (Mouse-ear cress).